Reading from the N-terminus, the 338-residue chain is Adenylosuccinate synthetase (338 aa).

GTP contacts are provided by residues 12 to 18 (GDEGKGK) and 42 to 44 (GHT). D13 functions as the Proton acceptor in the catalytic mechanism. Residues D13 and G42 each contribute to the Mg(2+) site. Residues 13-16 (DEGK), 40-43 (NAGH), T127, R141, Q179, T194, and R256 contribute to the IMP site. Catalysis depends on H43, which acts as the Proton donor. 252–258 (TVTGRRR) contacts substrate. Residues R258, 284-286 (CLD), and 324-326 (STG) contribute to the GTP site.

It belongs to the adenylosuccinate synthetase family. In terms of assembly, homodimer. It depends on Mg(2+) as a cofactor.

The protein localises to the cytoplasm. It carries out the reaction IMP + L-aspartate + GTP = N(6)-(1,2-dicarboxyethyl)-AMP + GDP + phosphate + 2 H(+). The protein operates within purine metabolism; AMP biosynthesis via de novo pathway; AMP from IMP: step 1/2. Functionally, plays an important role in the de novo pathway of purine nucleotide biosynthesis. Catalyzes the first committed step in the biosynthesis of AMP from IMP. In Methanococcus vannielii (strain ATCC 35089 / DSM 1224 / JCM 13029 / OCM 148 / SB), this protein is Adenylosuccinate synthetase.